The following is a 614-amino-acid chain: Asparagine synthetase [glutamine-hydrolyzing] 3 (614 aa).

Cys-2 acts as the For GATase activity in catalysis. One can recognise a Glutamine amidotransferase type-2 domain in the interval 2-216; it reads CGITGWVDFK…PAHALTFSKD (215 aa). L-glutamine-binding positions include 50 to 54, 77 to 79, and Asp-102; these read RLAVV and NGE. 377–378 serves as a coordination point for ATP; it reads SG.

It belongs to the asparagine synthetase family.

It carries out the reaction L-aspartate + L-glutamine + ATP + H2O = L-asparagine + L-glutamate + AMP + diphosphate + H(+). It participates in amino-acid biosynthesis; L-asparagine biosynthesis; L-asparagine from L-aspartate (L-Gln route): step 1/1. Asparagine synthetase involved in sporulation. The chain is Asparagine synthetase [glutamine-hydrolyzing] 3 (asnO) from Bacillus subtilis (strain 168).